A 365-amino-acid chain; its full sequence is 4-hydroxy-tetrahydrodipicolinate synthase 1, chloroplastic (365 aa).

Residues 1-39 (MSALKNYGLISIDSALHFPRSNQLQSYKRRNAKWVSPIA) constitute a chloroplast transit peptide. T108 contacts pyruvate. Y194 acts as the Proton donor/acceptor in catalysis. The active-site Schiff-base intermediate with substrate is the K222. I261 serves as a coordination point for pyruvate.

Belongs to the DapA family.

The protein resides in the plastid. The protein localises to the chloroplast. It catalyses the reaction L-aspartate 4-semialdehyde + pyruvate = (2S,4S)-4-hydroxy-2,3,4,5-tetrahydrodipicolinate + H2O + H(+). The protein operates within amino-acid biosynthesis; L-lysine biosynthesis via DAP pathway; (S)-tetrahydrodipicolinate from L-aspartate: step 3/4. Catalyzes the condensation of (S)-aspartate-beta-semialdehyde [(S)-ASA] and pyruvate to 4-hydroxy-tetrahydrodipicolinate (HTPA). This is 4-hydroxy-tetrahydrodipicolinate synthase 1, chloroplastic (DHDPS1) from Arabidopsis thaliana (Mouse-ear cress).